Here is a 213-residue protein sequence, read N- to C-terminus: MSTIVKICGLTTADTLEAAVETGADMVGFVFFPASPRHLDIDFADALGRQVRSRAAKVALTVDADDDLLDAIVEQLRPNWLQFHGSESPERVRSIKRIYGLPVMKAIAVAGPEDLSVLPDYAAVADRILFDARPPKDATRPGGLGAAFDWKLLDGVNLKLPFLVSGGINAGNVAEALRVTRAQGVDVSSGVETSPGEKDPDLIRDFIRAARAA.

This sequence belongs to the TrpF family.

The catalysed reaction is N-(5-phospho-beta-D-ribosyl)anthranilate = 1-(2-carboxyphenylamino)-1-deoxy-D-ribulose 5-phosphate. It participates in amino-acid biosynthesis; L-tryptophan biosynthesis; L-tryptophan from chorismate: step 3/5. This is N-(5'-phosphoribosyl)anthranilate isomerase from Rhodopseudomonas palustris (strain TIE-1).